The following is a 452-amino-acid chain: Na(+)/H(+) antiporter NhaA (452 aa).

11 consecutive transmembrane segments (helical) span residues 27-47 (FSGI…NSAL), 67-87 (FIGM…FFLM), 108-128 (AFPA…YTLF), 137-157 (GFGI…LLLG), 166-186 (VFLV…IAIF), 194-214 (LWLL…KMGV), 216-236 (SLFP…NCGI), 314-334 (PWSA…VAIS), 343-363 (GVLP…ILGL), 381-401 (WIDI…SIFI), and 414-434 (VAKI…YFFI).

It belongs to the NhaA Na(+)/H(+) (TC 2.A.33) antiporter family.

The protein localises to the cell inner membrane. The enzyme catalyses Na(+)(in) + 2 H(+)(out) = Na(+)(out) + 2 H(+)(in). Na(+)/H(+) antiporter that extrudes sodium in exchange for external protons. The protein is Na(+)/H(+) antiporter NhaA of Wolinella succinogenes (strain ATCC 29543 / DSM 1740 / CCUG 13145 / JCM 31913 / LMG 7466 / NCTC 11488 / FDC 602W) (Vibrio succinogenes).